The primary structure comprises 352 residues: Rhodopsin, freshwater form (352 aa).

Over 1 to 36 (MNGTEGPNFYVPMSNVTGVVRSPFEYPQYYLAEPWA) the chain is Extracellular. N-linked (GlcNAc...) asparagine glycans are attached at residues N2 and N15. The chain crosses the membrane as a helical span at residues 37 to 61 (YSALAAYMFFLIIAGFPINFLTLYV). The Cytoplasmic portion of the chain corresponds to 62-73 (TIEHKKLRTPLN). The chain crosses the membrane as a helical span at residues 74 to 98 (YILLNLAVADLFMVFGGFTTTMYTS). The Extracellular portion of the chain corresponds to 99–113 (MHGYFVFGPTGCNIE). An intrachain disulfide couples C110 to C187. A helical membrane pass occupies residues 114-133 (GFFATLGGEIALWCLVVLAV). At 134 to 152 (ERWMVVCKPMSNFRFGENH) the chain is on the cytoplasmic side. The chain crosses the membrane as a helical span at residues 153–176 (AIMGVAFTWVMALACAAPPLFGWS). The Extracellular segment spans residues 177–202 (RYIPEGMQCSCGMDHYAPNPETYNES). An N-linked (GlcNAc...) asparagine glycan is attached at N200. The chain crosses the membrane as a helical span at residues 203-230 (FVIYMFICHFTIPLTVISFCYGRLVCTV). Residues 231 to 252 (KEATAQQQESETTQRAEREVTR) lie on the Cytoplasmic side of the membrane. A helical transmembrane segment spans residues 253-276 (MVIIMVISFLVCWVPYASVAWYIF). Residues 277 to 284 (THQGSSFG) are Extracellular-facing. The helical transmembrane segment at 285-309 (PIFMTIPAFFAKSSSLYNPLIYICM) threads the bilayer. At K296 the chain carries N6-(retinylidene)lysine. The Cytoplasmic segment spans residues 310 to 352 (NKQSRNCMITTLCCGKNPFEEEEGASTTASKTEASSVSSVSPA). Residue C323 is the site of S-palmitoyl cysteine attachment. The disordered stretch occupies residues 330-352 (EEEGASTTASKTEASSVSSVSPA). Over residues 334–352 (ASTTASKTEASSVSSVSPA) the composition is skewed to low complexity.

It belongs to the G-protein coupled receptor 1 family. Opsin subfamily. In terms of processing, phosphorylated on some or all of the serine and threonine residues present in the C-terminal region. In terms of tissue distribution, rod shaped photoreceptor cells which mediates vision in dim light.

The protein resides in the membrane. Its function is as follows. Visual pigments such as rhodopsin and porphyropsin are light-absorbing molecules that mediate vision. Rhodopsin consists of an apoprotein, opsin, covalently linked to 11-cis-retinal. This receptor is coupled to the activation of phospholipase C. Porphyropsin consists of opsin covalently linked to 11-cis 3,4-didehydroretinal. The protein is Rhodopsin, freshwater form of Anguilla anguilla (European freshwater eel).